The following is a 505-amino-acid chain: Glycerol kinase (505 aa).

Thr14 is an ADP binding site. Thr14, Thr15, and Ser16 together coordinate ATP. Position 14 (Thr14) interacts with sn-glycerol 3-phosphate. Residue Arg18 coordinates ADP. Arg84, Glu85, Tyr136, and Asp246 together coordinate sn-glycerol 3-phosphate. 5 residues coordinate glycerol: Arg84, Glu85, Tyr136, Asp246, and Gln247. Thr268 and Gly311 together coordinate ADP. ATP-binding residues include Thr268, Gly311, Gln315, and Gly412. ADP-binding residues include Gly412 and Asn416.

The protein belongs to the FGGY kinase family.

It carries out the reaction glycerol + ATP = sn-glycerol 3-phosphate + ADP + H(+). The protein operates within polyol metabolism; glycerol degradation via glycerol kinase pathway; sn-glycerol 3-phosphate from glycerol: step 1/1. Its activity is regulated as follows. Inhibited by fructose 1,6-bisphosphate (FBP). In terms of biological role, key enzyme in the regulation of glycerol uptake and metabolism. Catalyzes the phosphorylation of glycerol to yield sn-glycerol 3-phosphate. The polypeptide is Glycerol kinase (Vibrio vulnificus (strain CMCP6)).